The following is a 558-amino-acid chain: uncharacterized protein (558 aa).

12 helical membrane-spanning segments follow: residues 21–41 (IFCF…LPIA), 69–89 (FLDA…STVV), 100–120 (IVLA…AFLA), 160–180 (IIFL…LFYF), 220–240 (AFQA…IDLI), 251–271 (GLGI…GIGY), 303–323 (VITN…VEFI), 386–406 (VFPV…AMFI), 413–433 (TAGG…VAKF), 454–474 (AFLV…LLPL), 479–499 (PVSF…VGLS), and 519–539 (ALCL…LTFV).

It belongs to the TrkH potassium transport family.

The protein localises to the cell membrane. This is an uncharacterized protein from Mycoplasma genitalium (strain ATCC 33530 / DSM 19775 / NCTC 10195 / G37) (Mycoplasmoides genitalium).